A 411-amino-acid chain; its full sequence is 2,3-bisphosphoglycerate-independent phosphoglycerate mutase (411 aa).

It belongs to the BPG-independent phosphoglycerate mutase family. A-PGAM subfamily.

It catalyses the reaction (2R)-2-phosphoglycerate = (2R)-3-phosphoglycerate. The protein operates within carbohydrate degradation; glycolysis; pyruvate from D-glyceraldehyde 3-phosphate: step 3/5. In terms of biological role, catalyzes the interconversion of 2-phosphoglycerate and 3-phosphoglycerate. This is 2,3-bisphosphoglycerate-independent phosphoglycerate mutase from Pyrobaculum aerophilum (strain ATCC 51768 / DSM 7523 / JCM 9630 / CIP 104966 / NBRC 100827 / IM2).